The following is a 466-amino-acid chain: MTQRVRTRFAPSPTGFIHLGNIRSALYPWAFARRMKGDFILRIEDTDVERSSQEAVDVILESMAWLEMDIDEGPFYQMQRMDRYREVVAQMVESGLAYRCYMSTEELDALREAQRERGEKPRYNGFWRPEPGKVLPEPPAGVDPVIRFKNPIGGSVVWDDAVKGRIEISNDELDDLVIARPDGTPTYNFCVVVDDLDMKITHVIRGDDHVNNTPRQINIIRALGGTPPVYAHLPTVLNEQGEKMSKRHGAMAVTGYRDEGYLPEAVLNYLARLGWAHGDAEIFSREQFVEWFDLEHLGKSPAQYNPEKLAWLNNHYIKVGDNQRLATLTQPFIEALGGKVEGADLAGVVALVKDRANTLKEVAQAALLFYRGEPQADAALKAEHLTPEIQPALAALANQLAALPEWKREAISATFKAVLAEFGLKMPKLAMPVRLLVAGQLQTPGIDAVLELFGRDTVLRRLAAAA.

The 'HIGH' region motif lies at 11–21 (PSPTGFIHLGN). The 'KMSKS' region motif lies at 243–247 (KMSKR). Lys-246 serves as a coordination point for ATP.

Belongs to the class-I aminoacyl-tRNA synthetase family. Glutamate--tRNA ligase type 1 subfamily. Monomer.

The protein localises to the cytoplasm. It carries out the reaction tRNA(Glu) + L-glutamate + ATP = L-glutamyl-tRNA(Glu) + AMP + diphosphate. Functionally, catalyzes the attachment of glutamate to tRNA(Glu) in a two-step reaction: glutamate is first activated by ATP to form Glu-AMP and then transferred to the acceptor end of tRNA(Glu). This is Glutamate--tRNA ligase from Cupriavidus necator (strain ATCC 17699 / DSM 428 / KCTC 22496 / NCIMB 10442 / H16 / Stanier 337) (Ralstonia eutropha).